Here is a 61-residue protein sequence, read N- to C-terminus: Small ribosomal subunit protein uS14 (61 aa).

Positions 24, 27, 40, and 43 each coordinate Zn(2+).

Belongs to the universal ribosomal protein uS14 family. Zinc-binding uS14 subfamily. As to quaternary structure, part of the 30S ribosomal subunit. Contacts proteins S3 and S10. The cofactor is Zn(2+).

Binds 16S rRNA, required for the assembly of 30S particles and may also be responsible for determining the conformation of the 16S rRNA at the A site. In Helicobacter pylori (strain J99 / ATCC 700824) (Campylobacter pylori J99), this protein is Small ribosomal subunit protein uS14.